The primary structure comprises 183 residues: MNKLIPLPREFFARDTNVVSTELIGKTLYFQGKTAIITETESYIGQNDPACHAARGRTKRTDIMFGPAGFSYVYLIYGMYYCLNFVTEAKGFPAATLIRGVHVISPENLYLNGPGKLCKYLGINISHNKCDLINNNEFFVGDIGLKLPYSTTARIGITKGTDKLWRYVVTDITNLISQYNVQP.

The protein belongs to the DNA glycosylase MPG family.

This is Putative 3-methyladenine DNA glycosylase from Rickettsia rickettsii (strain Iowa).